Reading from the N-terminus, the 248-residue chain is MLVIPAIDLYRKKVVRMVKGKKENTIFYEKDPIELVEKLVEEGFSLIHVVDLSRAIEESDENLPVLEKLSSYADHIQIGGGIRILEYAKKLLGMGFRRQIVSSKVLEDPSFLKKLKEIGVNPVFSLDTREGKVAFKGWLDEKDIDPVFLVNRLKEFGLEEIVHTEIEKDGTLKEHDFSLTERIALETGVKVIAAGGISSERSLEEALEVHRRTNGLLKGVIVGRAFLEGTLTVEVMKRYACQENNSVS.

Asp-8 (proton acceptor) is an active-site residue. Asp-127 functions as the Proton donor in the catalytic mechanism.

It belongs to the HisA/HisF family.

The protein localises to the cytoplasm. It catalyses the reaction 1-(5-phospho-beta-D-ribosyl)-5-[(5-phospho-beta-D-ribosylamino)methylideneamino]imidazole-4-carboxamide = 5-[(5-phospho-1-deoxy-D-ribulos-1-ylimino)methylamino]-1-(5-phospho-beta-D-ribosyl)imidazole-4-carboxamide. The protein operates within amino-acid biosynthesis; L-histidine biosynthesis; L-histidine from 5-phospho-alpha-D-ribose 1-diphosphate: step 4/9. In Thermotoga neapolitana (strain ATCC 49049 / DSM 4359 / NBRC 107923 / NS-E), this protein is 1-(5-phosphoribosyl)-5-[(5-phosphoribosylamino)methylideneamino] imidazole-4-carboxamide isomerase.